The sequence spans 336 residues: Shematrin-like protein 1 (336 aa).

The first 16 residues, 1–16 (MLRFIAIVALIATVNA), serve as a signal peptide directing secretion.

As to expression, prismatic layer of shell (at protein level). Expressed primarily in the mantle with highest level in the mantle edge and lower level in the mantle pallium.

It is found in the secreted. This is Shematrin-like protein 1 from Pinctada maxima (Silver-lipped pearl oyster).